A 382-amino-acid chain; its full sequence is Mannitol-1-phosphate 5-dehydrogenase (382 aa).

3–14 contacts NAD(+); the sequence is AIHFGAGNIGRG.

It belongs to the mannitol dehydrogenase family.

The enzyme catalyses D-mannitol 1-phosphate + NAD(+) = beta-D-fructose 6-phosphate + NADH + H(+). The protein is Mannitol-1-phosphate 5-dehydrogenase of Psychromonas ingrahamii (strain DSM 17664 / CCUG 51855 / 37).